The following is a 57-amino-acid chain: Large ribosomal subunit protein bL32 (57 aa).

Residues 1 to 19 (MATPKRRMSRANTRSRRSQ) show a composition bias toward basic residues. The interval 1–21 (MATPKRRMSRANTRSRRSQWK) is disordered.

This sequence belongs to the bacterial ribosomal protein bL32 family.

This chain is Large ribosomal subunit protein bL32, found in Mycobacterium ulcerans (strain Agy99).